The primary structure comprises 197 residues: Pyridoxal 5'-phosphate synthase subunit PdxT (197 aa).

An L-glutamine-binding site is contributed by 54-56 (GES). The active-site Nucleophile is the cysteine 86. Residues arginine 113 and 141–142 (IR) contribute to the L-glutamine site. Active-site charge relay system residues include histidine 177 and glutamate 179.

Belongs to the glutaminase PdxT/SNO family. In terms of assembly, in the presence of PdxS, forms a dodecamer of heterodimers. Only shows activity in the heterodimer.

The catalysed reaction is aldehydo-D-ribose 5-phosphate + D-glyceraldehyde 3-phosphate + L-glutamine = pyridoxal 5'-phosphate + L-glutamate + phosphate + 3 H2O + H(+). It carries out the reaction L-glutamine + H2O = L-glutamate + NH4(+). It participates in cofactor biosynthesis; pyridoxal 5'-phosphate biosynthesis. Catalyzes the hydrolysis of glutamine to glutamate and ammonia as part of the biosynthesis of pyridoxal 5'-phosphate. The resulting ammonia molecule is channeled to the active site of PdxS. The protein is Pyridoxal 5'-phosphate synthase subunit PdxT of Haloarcula marismortui (strain ATCC 43049 / DSM 3752 / JCM 8966 / VKM B-1809) (Halobacterium marismortui).